Reading from the N-terminus, the 513-residue chain is Histidine ammonia-lyase (513 aa).

Positions 144–146 form a cross-link, 5-imidazolinone (Ala-Gly); it reads ASG. Serine 145 is modified (2,3-didehydroalanine (Ser)).

Belongs to the PAL/histidase family. In terms of processing, contains an active site 4-methylidene-imidazol-5-one (MIO), which is formed autocatalytically by cyclization and dehydration of residues Ala-Ser-Gly.

The protein resides in the cytoplasm. The enzyme catalyses L-histidine = trans-urocanate + NH4(+). Its pathway is amino-acid degradation; L-histidine degradation into L-glutamate; N-formimidoyl-L-glutamate from L-histidine: step 1/3. In Streptococcus pyogenes serotype M18 (strain MGAS8232), this protein is Histidine ammonia-lyase.